Consider the following 93-residue polypeptide: Small ribosomal subunit protein mS33 (93 aa).

It belongs to the mitochondrion-specific ribosomal protein mS33 family. Component of the mitochondrial small ribosomal subunit (mt-SSU). Mature yeast 74S mitochondrial ribosomes consist of a small (37S) and a large (54S) subunit. The 37S small subunit contains a 15S ribosomal RNA (15S mt-rRNA) and at least 32 different proteins. The 54S large subunit contains a 21S rRNA (21S mt-rRNA) and at least 45 different proteins.

The protein localises to the mitochondrion. In terms of biological role, component of the mitochondrial ribosome (mitoribosome), a dedicated translation machinery responsible for the synthesis of mitochondrial genome-encoded proteins, including at least some of the essential transmembrane subunits of the mitochondrial respiratory chain. The mitoribosomes are attached to the mitochondrial inner membrane and translation products are cotranslationally integrated into the membrane. The protein is Small ribosomal subunit protein mS33 (rsm27) of Schizosaccharomyces pombe (strain 972 / ATCC 24843) (Fission yeast).